The primary structure comprises 423 residues: MLDIKLFRTEPEFVKKKLEMRAIDTSIVDEILELDIAARELTARTEELKAKRNKTSEEIAQKKRNKENADDAIKAMREVGEEIKRIDTELNEVSQTLKDKLVRLPNLVSDETPFGKDEDENVEVKKWGTPRTFDFEAKAHWDIVENLKMADFERAAKVSGARFAFLTKDGARLERALMNFMLDTHRANGYEEMVTPQLVNAASMFGTGQLPKFEEDLFKVEKEGLYTIPTSEVPLTNFYRDEILTNDMLPTKFTAMTACFRSEAGSAGRDTRGLIRMHQFNKVEMVRFERPEDSYAALEDMTRSAESILEKLNIPYRTIALCSGDIGFGAAKTYDVEVWLPSYDAYKEISSCSNMTDFQARRANIRFKRDKNAKAELVNTLNGSGLAVGRTFAAVVENYQNEDGSITVPEVLVPYMGGQTVIK.

Position 230-232 (230-232) interacts with L-serine; it reads TSE. 261–263 contributes to the ATP binding site; that stretch reads RSE. E284 contacts L-serine. 348 to 351 contacts ATP; the sequence is EISS. Residue S384 coordinates L-serine.

The protein belongs to the class-II aminoacyl-tRNA synthetase family. Type-1 seryl-tRNA synthetase subfamily. Homodimer. The tRNA molecule binds across the dimer.

It localises to the cytoplasm. The catalysed reaction is tRNA(Ser) + L-serine + ATP = L-seryl-tRNA(Ser) + AMP + diphosphate + H(+). The enzyme catalyses tRNA(Sec) + L-serine + ATP = L-seryl-tRNA(Sec) + AMP + diphosphate + H(+). It functions in the pathway aminoacyl-tRNA biosynthesis; selenocysteinyl-tRNA(Sec) biosynthesis; L-seryl-tRNA(Sec) from L-serine and tRNA(Sec): step 1/1. Its function is as follows. Catalyzes the attachment of serine to tRNA(Ser). Is also able to aminoacylate tRNA(Sec) with serine, to form the misacylated tRNA L-seryl-tRNA(Sec), which will be further converted into selenocysteinyl-tRNA(Sec). This is Serine--tRNA ligase from Macrococcus caseolyticus (strain JCSC5402) (Macrococcoides caseolyticum).